We begin with the raw amino-acid sequence, 374 residues long: Negative elongation factor E (374 aa).

Residues 7–36 adopt a coiled-coil conformation; sequence GLSEEEEALQKKFNKLKKKKKALLALKKQS. The segment covering 30–43 has biased composition (low complexity); sequence LALKKQSSSSTASQ. The tract at residues 30–58 is disordered; it reads LALKKQSSSSTASQGGVKRSLSEQPVVDT. Phosphoserine is present on serine 51. Residue lysine 78 forms a Glycyl lysine isopeptide (Lys-Gly) (interchain with G-Cter in SUMO1); alternate linkage. A Glycyl lysine isopeptide (Lys-Gly) (interchain with G-Cter in SUMO2); alternate cross-link involves residue lysine 78. The interval 79 to 252 is disordered; the sequence is AETKNSGFKR…SDSFPERRAP (174 aa). A Glycyl lysine isopeptide (Lys-Gly) (interchain with G-Cter in SUMO2) cross-link involves residue lysine 82. A compositionally biased stretch (basic and acidic residues) spans 90–101; the sequence is RTLEGKLKDPEK. 2 positions are modified to phosphoserine: serine 113 and serine 115. Residue glutamate 122 is modified to PolyADP-ribosyl glutamic acid. Serine 131 and serine 139 each carry phosphoserine. Glutamate 151 carries the polyADP-ribosyl glutamic acid modification. Serine 165 is subject to Phosphoserine. Glutamate 172 is subject to PolyADP-ribosyl glutamic acid. A phosphoserine mark is found at serine 179, serine 181, serine 185, and serine 187. Repeat copies occupy residues 184–185, 186–187, 188–189, 190–191, 192–193, 194–195, 196–197, 198–199, 200–201, 202–203, 204–205, 206–207, 208–209, 210–211, 212–213, 214–215, 216–217, 218–219, 220–221, 222–223, 224–225, 226–227, 228–229, 230–231, 232–233, 234–235, and 236–237. The segment at 184–237 is 27 X 2 AA approximate tandem repeats of R-[DSNE]; that stretch reads RSRSRDRSRERNRDRDRDRDRERDRERDRDRDRDRERDRDRDRDRDRDRERDRE. A compositionally biased stretch (basic and acidic residues) spans 186-250; it reads RSRDRSRERN…RRSDSFPERR (65 aa). Serine 191 carries the post-translational modification Phosphoserine. 2 positions are modified to phosphoserine: serine 243 and serine 245. The region spanning 256-326 is the RRM domain; it reads NTLYVYGEDM…VQLKVSIARK (71 aa). Residues threonine 266 and threonine 268 each carry the phosphothreonine modification. Serine 275 and serine 347 each carry phosphoserine. A PolyADP-ribosyl glutamic acid modification is found at glutamate 368.

The protein belongs to the RRM NELF-E family. The NELF complex is composed of NELFA, NELFB, NELFCD and NELFE. Interacts with NELFB. Phosphorylated by the P-TEFb complex at sites next to its RNA recognition motif, promoting its release from chromatin. Post-translationally, sumoylated. In terms of processing, poly-ADP-ribosylated by PARP1, thereby preventing RNA-binding and relieving transcription pausing.

Its subcellular location is the nucleus. It is found in the chromosome. Essential component of the NELF complex, a complex that negatively regulates the elongation of transcription by RNA polymerase II. The NELF complex, which acts via an association with the DSIF complex and causes transcriptional pausing, is counteracted by the P-TEFb kinase complex. Provides the strongest RNA binding activity of the NELF complex and may initially recruit the NELF complex to RNA. The chain is Negative elongation factor E (NELFE) from Bos taurus (Bovine).